The chain runs to 179 residues: Ubiquinol-cytochrome c reductase iron-sulfur subunit (179 aa).

A helical transmembrane segment spans residues 14–35; that stretch reads FLYVATAAVGAAGVAAVAWPFI. Residues 80–173 form the Rieske domain; the sequence is AKEIQSEEAA…YEFVDNTKIR (94 aa). Cys-118, His-120, Cys-137, and His-140 together coordinate [2Fe-2S] cluster. Cys-123 and Cys-139 are joined by a disulfide.

The protein belongs to the Rieske iron-sulfur protein family. As to quaternary structure, the main subunits of complex b-c1 are: cytochrome b, cytochrome c1 and the Rieske protein. [2Fe-2S] cluster serves as cofactor.

It localises to the cell membrane. The enzyme catalyses a quinol + 2 Fe(III)-[cytochrome c](out) = a quinone + 2 Fe(II)-[cytochrome c](out) + 2 H(+)(out). Functionally, component of the ubiquinol-cytochrome c reductase complex (complex III or cytochrome b-c1 complex), which is a respiratory chain that generates an electrochemical potential coupled to ATP synthesis. This chain is Ubiquinol-cytochrome c reductase iron-sulfur subunit (petA), found in Blastochloris viridis (Rhodopseudomonas viridis).